The chain runs to 508 residues: MGLPWYRVHTVVLNDPGRLISVHIMHTALVAGWAGSMTLYELAVFDPSDPVLDPMWRQGMFVIPFMTRLGIKDSWSGWNITGETVINPGIWSYEGVAGAHIMFSGLMFLAAIWHWVYWDLEIFYDERTGKLCLDLPKVFGIHLFLSGVACFGFGAFHVTGLYGPGIWVSDPYGLTGKIQPVDPAWGAEGFDPFVPGGIASHHIAAGILGILAGLFHLSVRPPQRLYVGLRMGNIETVLSSSIAAVFFAAFIVAGTMWYGSATTPVELFGPTRYQWDQGYFQQEIDRRVRAGLAENLSLSEAWSKIPEKLAFYDYIGNNPAKGGLFRAGAMDNGDGIAVGWLGHPIFKDKEGNELFVRRMPTFFETFPVVLVDKEGIVKADVPFRRAESKYSVEQVGVTVEFYGGGLDRVSFGDPAIVKKYARRAQLGEIFELDRATLKSDGVFRSSPRGWFTFGHATFALLFFSGHIWHGARTLFRDVFAGIDPDLDSRIEFGAFQKLGDPTTKRQVV.

6 consecutive transmembrane segments (helical) span residues 21 to 36, 101 to 115, 140 to 156, 203 to 218, 237 to 252, and 457 to 472; these read SVHI…WAGS, IMFS…IWHW, GIHL…FGAF, IAAG…FHLS, VLSS…AFIV, and TFAL…HGAR.

It belongs to the PsbB/PsbC family. PsbB subfamily. In terms of assembly, PSII is composed of 1 copy each of membrane proteins PsbA, PsbB, PsbC, PsbD, PsbE, PsbF, PsbH, PsbI, PsbJ, PsbK, PsbL, PsbM, PsbT, PsbX, PsbY, PsbZ, Psb30/Ycf12, at least 3 peripheral proteins of the oxygen-evolving complex and a large number of cofactors. It forms dimeric complexes. The cofactor is Binds multiple chlorophylls. PSII binds additional chlorophylls, carotenoids and specific lipids..

It is found in the plastid. Its subcellular location is the chloroplast thylakoid membrane. In terms of biological role, one of the components of the core complex of photosystem II (PSII). It binds chlorophyll and helps catalyze the primary light-induced photochemical processes of PSII. PSII is a light-driven water:plastoquinone oxidoreductase, using light energy to abstract electrons from H(2)O, generating O(2) and a proton gradient subsequently used for ATP formation. This chain is Photosystem II CP47 reaction center protein, found in Pinus koraiensis (Korean pine).